Here is a 485-residue protein sequence, read N- to C-terminus: UDP-N-acetylmuramoyl-L-alanyl-D-glutamate--2,6-diaminopimelate ligase (485 aa).

A UDP-N-acetyl-alpha-D-muramoyl-L-alanyl-D-glutamate-binding site is contributed by S32. 111 to 117 (GTNGKTT) is a binding site for ATP. UDP-N-acetyl-alpha-D-muramoyl-L-alanyl-D-glutamate-binding positions include 153 to 154 (TT), S180, and R188. At K220 the chain carries N6-carboxylysine. Meso-2,6-diaminopimelate contacts are provided by residues R382, 405–408 (DNPR), G455, and E459. Residues 405–408 (DNPR) carry the Meso-diaminopimelate recognition motif motif.

Belongs to the MurCDEF family. MurE subfamily. Mg(2+) is required as a cofactor. In terms of processing, carboxylation is probably crucial for Mg(2+) binding and, consequently, for the gamma-phosphate positioning of ATP.

Its subcellular location is the cytoplasm. The catalysed reaction is UDP-N-acetyl-alpha-D-muramoyl-L-alanyl-D-glutamate + meso-2,6-diaminopimelate + ATP = UDP-N-acetyl-alpha-D-muramoyl-L-alanyl-gamma-D-glutamyl-meso-2,6-diaminopimelate + ADP + phosphate + H(+). It functions in the pathway cell wall biogenesis; peptidoglycan biosynthesis. Catalyzes the addition of meso-diaminopimelic acid to the nucleotide precursor UDP-N-acetylmuramoyl-L-alanyl-D-glutamate (UMAG) in the biosynthesis of bacterial cell-wall peptidoglycan. The chain is UDP-N-acetylmuramoyl-L-alanyl-D-glutamate--2,6-diaminopimelate ligase from Chlamydia felis (strain Fe/C-56) (Chlamydophila felis).